The following is a 273-amino-acid chain: Protein FAM210A (273 aa).

Residues 94 to 116 form a disordered region; the sequence is RVLSSSSTSQETPSEKKEETDPL. Residues 106 to 116 show a composition bias toward basic and acidic residues; that stretch reads PSEKKEETDPL. Residues 118–230 form the DUF1279 domain; sequence DKSISLYQRF…GYMSTPPPVK (113 aa). Residues 138–158 form a helical membrane-spanning segment; the sequence is LIPVHLITSGIWFGTFYYATI. The stretch at 233-269 forms a coiled coil; that stretch reads LQGRMEETKELITEKMEETKDRLTEKLQETKGKVSFK.

This sequence belongs to the FAM210 family. As to quaternary structure, interacts with ATAD3A. In terms of tissue distribution, expressed in skeletal muscle, heart, brain but not in bone.

The protein localises to the membrane. The protein resides in the mitochondrion. It localises to the cytoplasm. Functionally, may play a role in the structure and strength of both muscle and bone. This is Protein FAM210A (Fam210a) from Mus musculus (Mouse).